We begin with the raw amino-acid sequence, 453 residues long: Bifunctional protein GlmU (453 aa).

A pyrophosphorylase region spans residues 1 to 225 (MHAHVILAAG…AEEALGVNTR (225 aa)). UDP-N-acetyl-alpha-D-glucosamine is bound by residues 7–10 (LAAG), Lys21, Gln72, and 77–78 (GT). Asp102 contacts Mg(2+). Gly138, Glu152, Asn167, and Asn223 together coordinate UDP-N-acetyl-alpha-D-glucosamine. Asn223 provides a ligand contact to Mg(2+). A linker region spans residues 226–246 (EELARVEGVLLRRLRAEWMGK). An N-acetyltransferase region spans residues 247 to 453 (GVRMILPETI…GYALRKLGEG (207 aa)). UDP-N-acetyl-alpha-D-glucosamine-binding residues include Arg329 and Lys347. Residue His359 is the Proton acceptor of the active site. 2 residues coordinate UDP-N-acetyl-alpha-D-glucosamine: Tyr362 and Asn373. Residues Ala376, 382–383 (NY), Ser401, Ala419, and Arg436 contribute to the acetyl-CoA site.

In the N-terminal section; belongs to the N-acetylglucosamine-1-phosphate uridyltransferase family. The protein in the C-terminal section; belongs to the transferase hexapeptide repeat family. In terms of assembly, homotrimer. It depends on Mg(2+) as a cofactor.

The protein resides in the cytoplasm. The catalysed reaction is alpha-D-glucosamine 1-phosphate + acetyl-CoA = N-acetyl-alpha-D-glucosamine 1-phosphate + CoA + H(+). The enzyme catalyses N-acetyl-alpha-D-glucosamine 1-phosphate + UTP + H(+) = UDP-N-acetyl-alpha-D-glucosamine + diphosphate. It participates in nucleotide-sugar biosynthesis; UDP-N-acetyl-alpha-D-glucosamine biosynthesis; N-acetyl-alpha-D-glucosamine 1-phosphate from alpha-D-glucosamine 6-phosphate (route II): step 2/2. The protein operates within nucleotide-sugar biosynthesis; UDP-N-acetyl-alpha-D-glucosamine biosynthesis; UDP-N-acetyl-alpha-D-glucosamine from N-acetyl-alpha-D-glucosamine 1-phosphate: step 1/1. It functions in the pathway bacterial outer membrane biogenesis; LPS lipid A biosynthesis. Functionally, catalyzes the last two sequential reactions in the de novo biosynthetic pathway for UDP-N-acetylglucosamine (UDP-GlcNAc). The C-terminal domain catalyzes the transfer of acetyl group from acetyl coenzyme A to glucosamine-1-phosphate (GlcN-1-P) to produce N-acetylglucosamine-1-phosphate (GlcNAc-1-P), which is converted into UDP-GlcNAc by the transfer of uridine 5-monophosphate (from uridine 5-triphosphate), a reaction catalyzed by the N-terminal domain. This Thermus thermophilus (strain ATCC BAA-163 / DSM 7039 / HB27) protein is Bifunctional protein GlmU.